The following is a 239-amino-acid chain: Ribosomal RNA small subunit methyltransferase G (239 aa).

S-adenosyl-L-methionine-binding positions include Gly-77, Phe-82, 128–129 (AE), and Arg-147.

The protein belongs to the methyltransferase superfamily. RNA methyltransferase RsmG family.

It is found in the cytoplasm. In terms of biological role, specifically methylates the N7 position of guanine in position 535 of 16S rRNA. The chain is Ribosomal RNA small subunit methyltransferase G from Bacillus anthracis (strain A0248).